The sequence spans 164 residues: Pyruvoyl-dependent arginine decarboxylase (164 aa).

Pyruvic acid (Ser) is present on Ser52.

Belongs to the PdaD family. Pyruvate is required as a cofactor.

It carries out the reaction L-arginine + H(+) = agmatine + CO2. This is Pyruvoyl-dependent arginine decarboxylase from Methanococcus maripaludis (strain C7 / ATCC BAA-1331).